A 1339-amino-acid polypeptide reads, in one-letter code: DNA-directed RNA polymerase subunit beta'' (1339 aa).

Positions 226, 299, 306, and 309 each coordinate Zn(2+).

Belongs to the RNA polymerase beta' chain family. RpoC2 subfamily. In terms of assembly, in plastids the minimal PEP RNA polymerase catalytic core is composed of four subunits: alpha, beta, beta', and beta''. When a (nuclear-encoded) sigma factor is associated with the core the holoenzyme is formed, which can initiate transcription. Zn(2+) is required as a cofactor.

Its subcellular location is the plastid. It localises to the chloroplast. The enzyme catalyses RNA(n) + a ribonucleoside 5'-triphosphate = RNA(n+1) + diphosphate. In terms of biological role, DNA-dependent RNA polymerase catalyzes the transcription of DNA into RNA using the four ribonucleoside triphosphates as substrates. In Cycas taitungensis (Prince sago), this protein is DNA-directed RNA polymerase subunit beta''.